We begin with the raw amino-acid sequence, 430 residues long: DNA polymerase IV 1 (430 aa).

The UmuC domain maps to 45–225 (LAHIDCDAFY…KPVTLIWGVG (181 aa)). The Mg(2+) site is built by Asp-49 and Asp-142. Residue Glu-143 is part of the active site.

Belongs to the DNA polymerase type-Y family. Monomer. It depends on Mg(2+) as a cofactor.

It localises to the cytoplasm. The enzyme catalyses DNA(n) + a 2'-deoxyribonucleoside 5'-triphosphate = DNA(n+1) + diphosphate. Functionally, poorly processive, error-prone DNA polymerase involved in untargeted mutagenesis. Copies undamaged DNA at stalled replication forks, which arise in vivo from mismatched or misaligned primer ends. These misaligned primers can be extended by PolIV. Exhibits no 3'-5' exonuclease (proofreading) activity. May be involved in translesional synthesis, in conjunction with the beta clamp from PolIII. In Rhizobium meliloti (strain 1021) (Ensifer meliloti), this protein is DNA polymerase IV 1 (dinB1).